A 468-amino-acid chain; its full sequence is ATP synthase subunit beta (468 aa).

155–162 (GGAGVGKT) serves as a coordination point for ATP.

This sequence belongs to the ATPase alpha/beta chains family. As to quaternary structure, F-type ATPases have 2 components, CF(1) - the catalytic core - and CF(0) - the membrane proton channel. CF(1) has five subunits: alpha(3), beta(3), gamma(1), delta(1), epsilon(1). CF(0) has three main subunits: a(1), b(2) and c(9-12). The alpha and beta chains form an alternating ring which encloses part of the gamma chain. CF(1) is attached to CF(0) by a central stalk formed by the gamma and epsilon chains, while a peripheral stalk is formed by the delta and b chains.

The protein resides in the cell membrane. It carries out the reaction ATP + H2O + 4 H(+)(in) = ADP + phosphate + 5 H(+)(out). Functionally, produces ATP from ADP in the presence of a proton gradient across the membrane. The catalytic sites are hosted primarily by the beta subunits. This chain is ATP synthase subunit beta, found in Streptococcus pneumoniae (strain CGSP14).